A 275-amino-acid chain; its full sequence is Large ribosomal subunit protein uL2 (275 aa).

2 disordered regions span residues 35–55 and 223–260; these read EKQT…RHKG and VAMN…KTRN. The span at 39-49 shows a compositional bias: polar residues; sequence RSSGRNNQGRV.

Belongs to the universal ribosomal protein uL2 family. As to quaternary structure, part of the 50S ribosomal subunit. Forms a bridge to the 30S subunit in the 70S ribosome.

In terms of biological role, one of the primary rRNA binding proteins. Required for association of the 30S and 50S subunits to form the 70S ribosome, for tRNA binding and peptide bond formation. It has been suggested to have peptidyltransferase activity; this is somewhat controversial. Makes several contacts with the 16S rRNA in the 70S ribosome. The protein is Large ribosomal subunit protein uL2 of Methylococcus capsulatus (strain ATCC 33009 / NCIMB 11132 / Bath).